We begin with the raw amino-acid sequence, 144 residues long: Crossover junction endodeoxyribonuclease Hjc (144 aa).

Mg(2+) is bound at residue E12. The active site involves S32. 2 residues coordinate Mg(2+): D42 and E55.

Belongs to the Holliday junction resolvase Hjc family. In terms of assembly, homodimer; forms a 2:1 complex with Hel308 (Hjm). May form a complex with Holliday junction DNA, Hjc and Hjm. Mg(2+) is required as a cofactor.

It carries out the reaction Endonucleolytic cleavage at a junction such as a reciprocal single-stranded crossover between two homologous DNA duplexes (Holliday junction).. With respect to regulation, cleavage stimulated by PCNA123 and PCNA323 and by RadC2. Its function is as follows. A structure-specific endonuclease that resolves Holliday junction (HJ) intermediates during genetic recombination. Cleaves 4-way DNA junctions introducing paired nicks in opposing strands, leaving a 5'-terminal phosphate and a 3'-terminal hydroxyl group that are subsequently ligated to produce recombinant products. Inhibits the helicase activity of Hel308 (Hjm). The chain is Crossover junction endodeoxyribonuclease Hjc from Sulfurisphaera tokodaii (strain DSM 16993 / JCM 10545 / NBRC 100140 / 7) (Sulfolobus tokodaii).